A 164-amino-acid polypeptide reads, in one-letter code: UPF0303 protein RHECIAT_CH0003058 (164 aa).

Belongs to the UPF0303 family.

In Rhizobium etli (strain CIAT 652), this protein is UPF0303 protein RHECIAT_CH0003058.